Reading from the N-terminus, the 408-residue chain is Ribosomal RNA large subunit methyltransferase DR_0049 (408 aa).

This sequence belongs to the methyltransferase superfamily.

The catalysed reaction is cytidine(2499) in 23S rRNA + S-adenosyl-L-methionine = 5-methylcytidine(2499) in 23S rRNA + S-adenosyl-L-homocysteine + H(+). Specifically methylates the cytosine at position 2499 (m5C2499) of 23S rRNA. In Deinococcus radiodurans (strain ATCC 13939 / DSM 20539 / JCM 16871 / CCUG 27074 / LMG 4051 / NBRC 15346 / NCIMB 9279 / VKM B-1422 / R1), this protein is Ribosomal RNA large subunit methyltransferase DR_0049.